The chain runs to 242 residues: Probable transcriptional regulatory protein HEAR0561 (242 aa).

It belongs to the TACO1 family.

It localises to the cytoplasm. This Herminiimonas arsenicoxydans protein is Probable transcriptional regulatory protein HEAR0561.